We begin with the raw amino-acid sequence, 455 residues long: ATP-dependent protease ATPase subunit HslU (455 aa).

ATP is bound by residues Val-23, 65–70, Asp-266, Glu-333, and Arg-405; that span reads GVGKTE.

The protein belongs to the ClpX chaperone family. HslU subfamily. As to quaternary structure, a double ring-shaped homohexamer of HslV is capped on each side by a ring-shaped HslU homohexamer. The assembly of the HslU/HslV complex is dependent on binding of ATP.

Its subcellular location is the cytoplasm. Functionally, ATPase subunit of a proteasome-like degradation complex; this subunit has chaperone activity. The binding of ATP and its subsequent hydrolysis by HslU are essential for unfolding of protein substrates subsequently hydrolyzed by HslV. HslU recognizes the N-terminal part of its protein substrates and unfolds these before they are guided to HslV for hydrolysis. The polypeptide is ATP-dependent protease ATPase subunit HslU (Xanthomonas campestris pv. campestris (strain 8004)).